Consider the following 297-residue polypeptide: Bifunctional protein FolD 2 (297 aa).

Residues 177-179 (GKS), I202, and I243 contribute to the NADP(+) site.

Belongs to the tetrahydrofolate dehydrogenase/cyclohydrolase family. Homodimer.

It carries out the reaction (6R)-5,10-methylene-5,6,7,8-tetrahydrofolate + NADP(+) = (6R)-5,10-methenyltetrahydrofolate + NADPH. The catalysed reaction is (6R)-5,10-methenyltetrahydrofolate + H2O = (6R)-10-formyltetrahydrofolate + H(+). It participates in one-carbon metabolism; tetrahydrofolate interconversion. Functionally, catalyzes the oxidation of 5,10-methylenetetrahydrofolate to 5,10-methenyltetrahydrofolate and then the hydrolysis of 5,10-methenyltetrahydrofolate to 10-formyltetrahydrofolate. The sequence is that of Bifunctional protein FolD 2 from Rhizorhabdus wittichii (strain DSM 6014 / CCUG 31198 / JCM 15750 / NBRC 105917 / EY 4224 / RW1) (Sphingomonas wittichii).